We begin with the raw amino-acid sequence, 116 residues long: U16-barytoxin-Tl1d (116 aa).

The first 20 residues, 1 to 20, serve as a signal peptide directing secretion; sequence MKTIIVFLSLLVLATKFGDA. A propeptide spanning residues 21-74 is cleaved from the precursor; it reads NEGVNQEQMKEVIQNEFREDFLNEMAAMSLLQQLEAIESTLLEKEADRNSRQKR. Intrachain disulfides connect Cys75-Cys90, Cys82-Cys95, and Cys89-Cys110.

The protein belongs to the neurotoxin 14 (magi-1) family. 06 (ICK-Trit) subfamily. In terms of tissue distribution, expressed by the venom gland.

The protein localises to the secreted. Its function is as follows. Ion channel inhibitor. The protein is U16-barytoxin-Tl1d of Trittame loki (Brush-footed trapdoor spider).